A 489-amino-acid chain; its full sequence is Mitochondrial distribution and morphology protein 34 (489 aa).

The SMP-LTD domain occupies 1–205 (MSFNINWDSI…LPSVLYKFSQ (205 aa)).

Belongs to the MDM34 family. As to quaternary structure, component of the ER-mitochondria encounter structure (ERMES) or MDM complex, composed of MMM1, MDM10, MDM12 and MDM34.

The protein resides in the mitochondrion outer membrane. Its function is as follows. Component of the ERMES/MDM complex, which serves as a molecular tether to connect the endoplasmic reticulum (ER) and mitochondria. Components of this complex are involved in the control of mitochondrial shape and protein biogenesis, and function in nonvesicular lipid trafficking between the ER and mitochondria. MDM34 is required for the interaction of the ER-resident membrane protein MMM1 and the outer mitochondrial membrane-resident beta-barrel protein MDM10. The sequence is that of Mitochondrial distribution and morphology protein 34 from Komagataella phaffii (strain GS115 / ATCC 20864) (Yeast).